The following is a 103-amino-acid chain: BLOC-1-related complex subunit 7 (103 aa).

Belongs to the BORCS7 family.

The protein resides in the lysosome membrane. Its function is as follows. As part of a BORC-like complex may play a role in lysosomes movement and localization at the cell periphery. Associated with the cytosolic face of lysosomes, this complex may couple lysosomes to microtubule plus-end-directed kinesin motor. The sequence is that of BLOC-1-related complex subunit 7 from Danio rerio (Zebrafish).